We begin with the raw amino-acid sequence, 95 residues long: Nodulin (95 aa).

This Striga hermonthica (Purple witchweed) protein is Nodulin.